Reading from the N-terminus, the 433-residue chain is Isocitrate dehydrogenase [NADP], chloroplastic (433 aa).

The transit peptide at glutamine 1–threonine 21 directs the protein to the chloroplast. NADP(+)-binding positions include threonine 98–threonine 100 and arginine 105. Threonine 100 provides a ligand contact to substrate. Substrate-binding positions include serine 117–arginine 123, arginine 132, and arginine 155. Aspartate 275 is a Mn(2+) binding site. Lysine 283 contacts NADP(+). Aspartate 298 lines the Mn(2+) pocket. Residues glycine 333–histidine 338 and asparagine 351 each bind NADP(+).

This sequence belongs to the isocitrate and isopropylmalate dehydrogenases family. Requires Mg(2+) as cofactor. Mn(2+) serves as cofactor. In terms of tissue distribution, detected in all tissues examined.

The protein resides in the plastid. It is found in the chloroplast. The enzyme catalyses D-threo-isocitrate + NADP(+) = 2-oxoglutarate + CO2 + NADPH. This Medicago sativa (Alfalfa) protein is Isocitrate dehydrogenase [NADP], chloroplastic.